The chain runs to 68 residues: Protein transport protein Sec61 subunit gamma (68 aa).

Over 1–32 the chain is Cytoplasmic; sequence MDQVMAWVEPGKQFAKDSIRLVKRCTKPDRKE. Residues 33–61 form a helical membrane-spanning segment; the sequence is FQKIAVATAIGFAIMGFIGFFVKLIHIPI. At 62–68 the chain is on the extracellular side; sequence NNIIVGS.

It belongs to the SecE/SEC61-gamma family. In terms of assembly, heterotrimeric complex composed of SEC61-alpha, SEC61-beta and SEC61-gamma. Component of the ribosome-associated ER translocon complex.

The protein localises to the endoplasmic reticulum membrane. Necessary for protein translocation in the endoplasmic reticulum and multi-pass membrane protein biogenesis. The polypeptide is Protein transport protein Sec61 subunit gamma (SEC61G) (Ciona intestinalis (Transparent sea squirt)).